The chain runs to 232 residues: Small ribosomal subunit protein uS3 (232 aa).

The KH type-2 domain occupies 39–107 (VRQYLTKELK…PAQINIAEVR (69 aa)).

This sequence belongs to the universal ribosomal protein uS3 family. As to quaternary structure, part of the 30S ribosomal subunit. Forms a tight complex with proteins S10 and S14.

Its function is as follows. Binds the lower part of the 30S subunit head. Binds mRNA in the 70S ribosome, positioning it for translation. The protein is Small ribosomal subunit protein uS3 of Aliivibrio salmonicida (strain LFI1238) (Vibrio salmonicida (strain LFI1238)).